A 336-amino-acid chain; its full sequence is Zinc finger protein GFI1 homolog pag-3 (336 aa).

5 consecutive C2H2-type zinc fingers follow at residues 126–148 (FHCQ…QQVH), 154–176 (FECK…LLIH), 182–204 (YPCE…TYIH), 210–232 (HKCT…TRKH), and 238–260 (FACD…RESH). Positions 253–290 (RRRHRESHHPGHPEECVSASQISSDLSPKGYMTPPTSN) are disordered.

May interact with transcription factor unc-3. Expressed in the BDU neurons, the touch neurons, the VA, VB and VC motor neurons, two AVF interneurons and unidentified neurons of the retrovesicular ganglion (at protein level).

Its subcellular location is the nucleus. The protein resides in the cell projection. The protein localises to the axon. It is found in the perikaryon. In terms of biological role, transcription factor. Plays a role in the determination of neuroblast cell fate and neuronal differentiation. Negatively modulates expression of several components of dense-core vesicles (DCVs), thereby, in a DCV membrane protein ida-1-dependent manner, regulating neurosecretion. Negatively modulates the transcription of its own gene, the mechanosensory gene mec-3, and also other touch neuron-specific genes in the BDU neurons; required for coordinated movement. Required to determine the identity of BDU sensory neurons in concert with transcription factor unc-86, regulating expression of a number of genes, including transcription factors ceh-14 and ahr-1, neuropeptides flp-10, nlp-1 and nlp-15, and tyramine receptor-encoding ser-2. Acts in concert with non-canonical WNT signaling to negatively modulate transcription of mec-3 gene in BDU neurons. May act in concert with transcription factor unc-3 in motor neuron fate determination. May play a role programmed cell death. This Caenorhabditis elegans protein is Zinc finger protein GFI1 homolog pag-3.